The following is a 355-amino-acid chain: 3-isopropylmalate dehydrogenase (355 aa).

Residues R90, R100, R128, and D222 each coordinate substrate. Mg(2+) is bound by residues D222, D246, and D250. 280–292 (GSAPDIAGKGVAN) lines the NAD(+) pocket.

The protein belongs to the isocitrate and isopropylmalate dehydrogenases family. LeuB type 1 subfamily. Homodimer. The cofactor is Mg(2+). It depends on Mn(2+) as a cofactor.

Its subcellular location is the cytoplasm. The catalysed reaction is (2R,3S)-3-isopropylmalate + NAD(+) = 4-methyl-2-oxopentanoate + CO2 + NADH. It functions in the pathway amino-acid biosynthesis; L-leucine biosynthesis; L-leucine from 3-methyl-2-oxobutanoate: step 3/4. Its function is as follows. Catalyzes the oxidation of 3-carboxy-2-hydroxy-4-methylpentanoate (3-isopropylmalate) to 3-carboxy-4-methyl-2-oxopentanoate. The product decarboxylates to 4-methyl-2 oxopentanoate. The chain is 3-isopropylmalate dehydrogenase from Cupriavidus metallidurans (strain ATCC 43123 / DSM 2839 / NBRC 102507 / CH34) (Ralstonia metallidurans).